We begin with the raw amino-acid sequence, 266 residues long: Gap junction beta-4 protein (266 aa).

An intramembrane segment occupies 2–13; it reads NWGFLQGILSGV. Topologically, residues 14 to 20 are cytoplasmic; it reads NKYSTAL. The helical transmembrane segment at 21–40 threads the bilayer; sequence GRIWLSVVFIFRVLVYVVAA. Over 41 to 73 the chain is Extracellular; that stretch reads EEVWDDDQKDFICNTKQPGCPNVCYDEFFPVSH. 3 cysteine pairs are disulfide-bonded: cysteine 53-cysteine 175, cysteine 60-cysteine 169, and cysteine 64-cysteine 164. Residues 74–94 traverse the membrane as a helical segment; the sequence is VRLWALQLILVTCPSLLVVMH. Topologically, residues 95–130 are cytoplasmic; the sequence is VAYREERERKHRLKHGPNAPALYSNLSKKRGGLWWT. A helical transmembrane segment spans residues 131-151; it reads YLLSLIFKAAVDSGFLYIFHC. At 152 to 184 the chain is on the extracellular side; it reads IYKDYDMPRVVACSVTPCPHTVDCYIARPTEKK. Residues 185–205 traverse the membrane as a helical segment; the sequence is VFTYFMVVTAAICILLNLSEV. The Cytoplasmic portion of the chain corresponds to 206–266; it reads VYLVGKRCME…MATVDAGVYP (61 aa).

It belongs to the connexin family. Beta-type (group I) subfamily. A hemichannel or connexon is composed of a hexamer of connexins. A functional gap junction is formed by the apposition of two hemichannels. Forms heteromeric channels with GJB2. Detected in cochlea (at protein level). Detected in cochlea. Expressed in skin.

The protein localises to the cell membrane. Its subcellular location is the cell junction. It is found in the gap junction. Structural component of gap junctions. Gap junctions are dodecameric channels that connect the cytoplasm of adjoining cells. They are formed by the docking of two hexameric hemichannels, one from each cell membrane. Small molecules and ions diffuse from one cell to a neighboring cell via the central pore. This Mus musculus (Mouse) protein is Gap junction beta-4 protein (Gjb4).